Consider the following 30-residue polypeptide: GLPCGESCVYIPCISTVLGCSCSNKVCYRN.

Residues 1-30 (GLPCGESCVYIPCISTVLGCSCSNKVCYRN) constitute a cross-link (cyclopeptide (Gly-Asn)). 3 cysteine pairs are disulfide-bonded: cysteine 4-cysteine 20, cysteine 8-cysteine 22, and cysteine 13-cysteine 27.

In terms of processing, this is a cyclic peptide. In terms of tissue distribution, detected in seeds (at protein level).

Functionally, probably participates in a plant defense mechanism. The chain is Cyclotide hyen-F from Pigea enneasperma (Spade flower).